We begin with the raw amino-acid sequence, 329 residues long: Deoxynucleotidyltransferase terminal-interacting protein 1 (329 aa).

A disordered region spans residues 1-27 (MGATGDVEQPRGPGGAERGGPELGDAG). Over residues 12–22 (GPGGAERGGPE) the composition is skewed to gly residues. An important for dimerization region spans residues 56–147 (MTTSFTDPAI…RLTHELPGIK (92 aa)). Residues 159–173 (RGSPIPKKRKGRPPG) constitute a DNA-binding region (a.T hook). Residue serine 161 is modified to Phosphoserine. A Nuclear localization signal motif is present at residues 164–170 (PKKRKGR). The interval 197 to 316 (REGPKWDPAR…MRKYMETLRT (120 aa)) is important for DNA and nucleosome binding. A DNA-binding region (H-T-H motif) is located at residues 216 to 237 (GSRANKALGMGGTRGRIYIKHP).

Monomer and homodimer. A minor proportion may form homotrimers. Interacts with ZNF541. Interacts with the terminal deoxynucleotidyltransferase DNTT. Interacts with TRERF1. Identified in a histone deacetylase complex that contains DNTTIP1, HDAC1 and MIDEAS; this complex assembles into a tetramer that contains four copies of each protein chain. Component of a histone deacetylase complex containing DNTTIP1, ZNF541, HDAC1 and HDAC2. Identified in a complex with KCTD19, HDAC1, HDAC2 and ZNF541.

Its subcellular location is the nucleus. Its function is as follows. Increases DNTT terminal deoxynucleotidyltransferase activity (in vitro). Also acts as a transcriptional regulator, binding to the consensus sequence 5'-GNTGCATG-3' following an AT-tract. Associates with RAB20 promoter and positively regulates its transcription. Binds DNA and nucleosomes; may recruit HDAC1 complexes to nucleosomes or naked DNA. The protein is Deoxynucleotidyltransferase terminal-interacting protein 1 (DNTTIP1) of Bos taurus (Bovine).